The primary structure comprises 426 residues: MDQQIYSLQKKVEEHKEELIQLAKTLISYQTPAPPARNTEGIQSWIAGYLNELGFSIDKWDVYPGDPNVVGKLKGTDSADYYSLIINGHVDVAEVKEDEEWKHDPFHPIEKNGLLIGRGASDMKGGMACVLFAVKLIREASIELPGDLILQSVIGEEVGEAGTLECCKRGYHADFAIVADTSDMHIQGQGGVITGWIEIKSSQTFHDGTRRNMIHAGGGTFGASAIEKMAKIIAGLGELERHWSIMKSYPGFKPGTNTINPAVIEGGRHAAFIADECRLWITVHFYPNETHDQVAAEIEDYVNRLSDSDIWLRENRPVFKWGGSSMIEDRGEIFPALEVDPGHPGVLALTASHQKVKRECPIIDVSQSVTDGGWLYDAGIPCVIYGPGDLHNAHSVNEKVSIEQLVEYTKIILDFIISWCSRKKEQ.

Residues 1 to 31 (MDQQIYSLQKKVEEHKEELIQLAKTLISYQT) are a coiled coil. H89 contributes to the Zn(2+) binding site. Residue D91 is part of the active site. Residue D122 coordinates Zn(2+). E156 (proton acceptor) is an active-site residue. Residues E157, D180, and H394 each contribute to the Zn(2+) site.

Belongs to the peptidase M20A family. It depends on Zn(2+) as a cofactor. Co(2+) serves as cofactor.

It catalyses the reaction N-formyl-4-amino-5-aminomethyl-2-methylpyrimidine + H2O = 4-amino-5-aminomethyl-2-methylpyrimidine + formate. Its pathway is cofactor biosynthesis; thiamine diphosphate biosynthesis. Its function is as follows. Catalyzes the deformylation of the formylaminopyrimidine N-formyl-4-amino-5-aminomethyl-2-methylpyrimidine (FAMP) to give the corresponding aminopyrimidine. The chain is N-formyl-4-amino-5-aminomethyl-2-methylpyrimidine deformylase from Bacillus subtilis (strain 168).